Here is a 162-residue protein sequence, read N- to C-terminus: Protein NrdI (162 aa).

This sequence belongs to the NrdI family.

In terms of biological role, probably involved in ribonucleotide reductase function. In Streptococcus pyogenes serotype M2 (strain MGAS10270), this protein is Protein NrdI.